A 300-amino-acid chain; its full sequence is tRNA-cytidine(32) 2-sulfurtransferase (300 aa).

A PP-loop motif motif is present at residues 57-62 (SGGKDS). The [4Fe-4S] cluster site is built by Cys-132, Cys-135, and Cys-223.

The protein belongs to the TtcA family. As to quaternary structure, homodimer. Mg(2+) is required as a cofactor. Requires [4Fe-4S] cluster as cofactor.

The protein resides in the cytoplasm. The enzyme catalyses cytidine(32) in tRNA + S-sulfanyl-L-cysteinyl-[cysteine desulfurase] + AH2 + ATP = 2-thiocytidine(32) in tRNA + L-cysteinyl-[cysteine desulfurase] + A + AMP + diphosphate + H(+). It functions in the pathway tRNA modification. Functionally, catalyzes the ATP-dependent 2-thiolation of cytidine in position 32 of tRNA, to form 2-thiocytidine (s(2)C32). The sulfur atoms are provided by the cysteine/cysteine desulfurase (IscS) system. This Xanthomonas campestris pv. campestris (strain 8004) protein is tRNA-cytidine(32) 2-sulfurtransferase.